A 419-amino-acid polypeptide reads, in one-letter code: Copalyl diphosphate synthase 2, chloroplastic (419 aa).

Lys82 serves as a coordination point for substrate.

It belongs to the terpene synthase family. Tpsc subfamily. Mg(2+) serves as cofactor. Ubiquitous expression in roots, stems, leaves and flowers.

The protein resides in the plastid. It localises to the chloroplast. It catalyses the reaction (2E,6E,10E)-geranylgeranyl diphosphate = (+)-copalyl diphosphate. Its pathway is secondary metabolite biosynthesis; terpenoid biosynthesis. Its function is as follows. Involved in the biosynthesis of ent-kaurene diterpenoids natural products such as oridonin, miltiradiene, eriocalyxin B and nezukol, known to exhibit antitumor, anti-inflammatory and antibacterial activities. Catalyzes the conversion of (2E,6E,10E)-geranylgeranyl diphosphate (GGPP) to (+)-copalyl diphosphate ((+)-CPP). This Isodon rubescens (Rabdosia rubescens) protein is Copalyl diphosphate synthase 2, chloroplastic.